Consider the following 706-residue polypeptide: Translation factor GUF1 homolog, mitochondrial (706 aa).

The tr-type G domain maps to 89–272 (SRIRNFSIIA…SIVKNVPPPQ (184 aa)). GTP-binding positions include 98–105 (AHIDHGKS), 165–169 (DTPGH), and 219–222 (NKID).

This sequence belongs to the TRAFAC class translation factor GTPase superfamily. Classic translation factor GTPase family. LepA subfamily.

It localises to the mitochondrion inner membrane. The catalysed reaction is GTP + H2O = GDP + phosphate + H(+). In terms of biological role, promotes mitochondrial protein synthesis. May act as a fidelity factor of the translation reaction, by catalyzing a one-codon backward translocation of tRNAs on improperly translocated ribosomes. Binds to mitochondrial ribosomes in a GTP-dependent manner. In Thalassiosira pseudonana (Marine diatom), this protein is Translation factor GUF1 homolog, mitochondrial.